Reading from the N-terminus, the 3021-residue chain is Genome polyprotein (3021 aa).

Ser2 is subject to N-acetylserine; by host. Residues Ser2–Lys23 are interaction with STAT1. Residues Ser2 to Pro58 are interaction with EIF2AK2/PKR. The interaction with DDX3X stretch occupies residues Ser2–Arg59. Residues Ser2–Ser75 are disordered. Residues Ser2–Asn168 are Cytoplasmic-facing. 2 consecutive short sequence motifs (nuclear localization signal) follow at residues Pro5–Arg13 and Pro38–Arg43. The segment covering Pro7 to Ile16 has biased composition (basic residues). Position 53 is a phosphoserine; by host (Ser53). 2 short sequence motifs (nuclear localization signal) span residues Pro58–Pro64 and Pro66–Ser71. Residues Pro58–Ala68 are compositionally biased toward basic residues. Phosphoserine; by host is present on residues Ser99 and Ser116. The tract at residues Pro112–Ala152 is important for endoplasmic reticulum and mitochondrial localization. Positions Val122–Ser173 are interaction with APOA2. The interval Phe164–Gly167 is important for lipid droplets localization. The chain crosses the membrane as a helical span at residues Leu169–Ala189. Residues Leu178–Ser191 constitute a propeptide, ER anchor for the core protein, removed in mature form by host signal peptidase. Residues Ala190–Gly358 lie on the Lumenal side of the membrane. 3 N-linked (GlcNAc...) asparagine; by host glycosylation sites follow: Asn196, Asn209, and Asn234. The tract at residues Leu265 to Arg296 is important for fusion. A glycan (N-linked (GlcNAc...) asparagine; by host) is linked at Asn305. The chain crosses the membrane as a helical span at residues Leu359 to Ser379. At Gly380 to Leu731 the chain is on the lumenal side. The tract at residues Thr385–Gln412 is HVR1. 3 N-linked (GlcNAc...) (high mannose) asparagine; by host glycosylation sites follow: Asn417, Asn423, and Asn430. Cystine bridges form between Cys429/Cys553, Cys452/Cys459, Cys487/Cys495, and Cys504/Cys509. N-linked (GlcNAc...) asparagine; by host glycosylation occurs at Asn448. Residues Ala475–Gly479 form an HVR2 region. Asn476 carries an N-linked (GlcNAc...) asparagine; by host glycan. The tract at residues Ser481–Pro494 is CD81-binding 1. N-linked (GlcNAc...) asparagine; by host glycosylation is present at Asn533. The interval Pro545–Gly552 is CD81-binding 2. A glycan (N-linked (GlcNAc...) asparagine; by host) is linked at Asn557. 4 disulfide bridges follow: Cys565–Cys570, Cys587–Cys591, Cys603–Cys626, and Cys613–Cys650. N-linked (GlcNAc...) (high mannose) asparagine; by host glycosylation is found at Asn629 and Asn651. Cys658 and Cys683 are joined by a disulfide. Residues Ser666–Glu677 form a PKR/eIF2-alpha phosphorylation homology domain (PePHD) region. A helical membrane pass occupies residues Leu732–Ala752. Topologically, residues Ala753 to Val763 are lumenal. Residues Ala764–Val784 form a helical membrane-spanning segment. Residues Arg785–Lys787 are Cytoplasmic-facing. The helical transmembrane segment at Leu788–Leu809 threads the bilayer. The Lumenal segment spans residues Pro810–Glu819. Residues Asp820–Trp840 form a helical membrane-spanning segment. The Cytoplasmic portion of the chain corresponds to Tyr841–Trp844. Residues Ile845–His864 traverse the membrane as a helical segment. Over Val865–Tyr887 the chain is Lumenal. Residues Pro888–Ile908 traverse the membrane as a helical segment. Residues Leu905 to Leu1032 form the Peptidase C18 domain. Over Gln909–Thr1663 the chain is Cytoplasmic. A protease NS2-3 region spans residues Ala910–Arg1212. A lipid anchor (S-palmitoyl cysteine; by host) is attached at Cys928. Residues Met935–Leu955 are interaction with host SCPS1. Active-site for protease NS2 activity; shared with dimeric partner residues include His958, Glu978, and Cys999. One can recognise a Peptidase S29 domain in the interval Ala1033–Pro1214. Catalysis depends on charge relay system; for serine protease NS3 activity residues His1089 and Asp1113. Residues Cys1129 and Cys1131 each contribute to the Zn(2+) site. Ser1171 functions as the Charge relay system; for serine protease NS3 activity in the catalytic mechanism. Positions 1177 and 1181 each coordinate Zn(2+). The Helicase ATP-binding domain maps to Pro1223 to Ser1375. Ala1236–Ser1243 contacts ATP. Ser1243 is a Mg(2+) binding site. The DECH box signature appears at Asp1322–His1325. The region spanning Tyr1382–Arg1544 is the Helicase C-terminal domain. The tract at residues Gln1492–Thr1504 is RNA-binding. A helical transmembrane segment spans residues Ser1664 to Gly1684. The tract at residues Cys1685–Gly1696 is NS3-binding. Over Cys1685–Gln1811 the chain is Cytoplasmic. A helical transmembrane segment spans residues Thr1812–Gln1830. The Lumenal segment spans residues Ala1831–Ala1834. The chain crosses the membrane as a helical span at residues Phe1835 to Leu1855. Residue Asp1856 is a topological domain, cytoplasmic. Residues Ile1857 to Gly1877 traverse the membrane as a helical segment. Residues Glu1878–Asn1887 are Lumenal-facing. The helical transmembrane segment at Leu1888–Leu1908 threads the bilayer. Residues Arg1909 to Cys1978 are Cytoplasmic-facing. Cys1978 is lipidated: S-palmitoyl cysteine; by host. Residues Ser1979–Ala2008 lie within the membrane without spanning it. Over Leu2009–Arg3000 the chain is Cytoplasmic. Residues Cys2017, Cys2035, Cys2037, and Cys2058 each contribute to the Zn(2+) site. The FKBP8-binding stretch occupies residues Glu2126–Ala2214. A transcriptional activation region spans residues Glu2126–Thr2338. An interaction with non-structural protein 4A region spans residues Pro2141–Pro2145. Residues Ala2193 to Pro2215 are disordered. Residues Arg2195–Glu2448 form an interaction with host SKP2 region. Phosphoserine; by host is present on residues Ser2200, Ser2203, Ser2207, Ser2210, Ser2213, and Ser2216. A compositionally biased stretch (low complexity) spans Ser2200–Pro2215. Residues Ser2216–Lys2255 form an ISDR region. Residues Ser2216–Phe2281 are interaction with EIF2AK2/PKR. Residues Lys2255–Tyr2312 are NS4B-binding. The segment at Asp2305–Val2383 is V3. Disordered stretches follow at residues His2318 to Thr2338 and Lys2356 to Val2419. Residues Pro2328 to Pro2331 carry the SH3-binding motif. The Nuclear localization signal signature appears at Pro2333 to Leu2341. Lys2356 is covalently cross-linked (Glycyl lysine isopeptide (Lys-Gly) (interchain with G-Cter in ubiquitin)). A compositionally biased stretch (low complexity) spans Pro2359 to Ser2381. 2 positions are modified to phosphoserine; by host: Ser2459 and Ser2472. The RdRp catalytic domain occupies Pro2644–Asp2762. Mg(2+)-binding residues include Asp2650, Asp2748, and Asp2749. The helical transmembrane segment at Tyr3001–Arg3021 threads the bilayer.

The protein belongs to the hepacivirus polyprotein family. Homooligomer. Interacts with E1 (via C-terminus). Interacts with the non-structural protein 5A. Interacts (via N-terminus) with host STAT1 (via SH2 domain); this interaction results in decreased STAT1 phosphorylation and ubiquitin-mediated proteasome-dependent STAT1 degradation, leading to decreased IFN-stimulated gene transcription. Interacts with host STAT3; this interaction constitutively activates STAT3. Interacts with host LTBR receptor. Interacts with host TNFRSF1A receptor and possibly induces apoptosis. Interacts with host HNRPK. Interacts with host YWHAE. Interacts with host UBE3A/E6AP. Interacts with host DDX3X. Interacts with host APOA2. Interacts with host RXRA protein. Interacts with host SP110 isoform 3/Sp110b; this interaction sequesters the transcriptional corepressor SP110 away from the nucleus. Interacts with host CREB3 nuclear transcription protein; this interaction triggers cell transformation. Interacts with host ACY3. Interacts with host C1QR1. Interacts with host RBM24; this interaction, which enhances the interaction of the mature core protein with 5'-UTR, may inhibit viral translation and favor replication. Interacts with host EIF2AK2/PKR; this interaction induces the autophosphorylation of EIF2AK2. Part of the viral assembly initiation complex composed of NS2, E1, E2, NS3, NS4A, NS5A and the mature core protein. As to quaternary structure, forms a heterodimer with envelope glycoprotein E2. Interacts with mature core protein. Interacts with protease NS2. The heterodimer E1/E2 interacts with host CLDN1; this interaction plays a role in viral entry into host cell. Interacts with host SPSB2 (via C-terminus). Part of the viral assembly initiation complex composed of NS2, E1, E2, NS3, NS4A, NS5A and the mature core protein. Interacts with host NEURL3; this interaction prevents E1 binding to glycoprotein E2. In terms of assembly, forms a heterodimer with envelope glycoprotein E1. Interacts with host CD81 and SCARB1 receptors; these interactions play a role in viral entry into host cell. Interacts with host EIF2AK2/PKR; this interaction inhibits EIF2AK2 and probably allows the virus to evade the innate immune response. Interacts with host CD209/DC-SIGN and CLEC4M/DC-SIGNR. Interact with host SPCS1; this interaction is essential for viral particle assembly. Interacts with protease NS2. The heterodimer E1/E2 interacts with host CLDN1; this interaction plays a role in viral entry into host cell. Part of the viral assembly initiation complex composed of NS2, E1, E2, NS3, NS4A, NS5A and the mature core protein. Interacts with host SLC3A2/4F2hc; the interaction may facilitate viral entry into host cell. Interacts with human PLSCR1. Homohexamer. Homoheptamer. Interacts with protease NS2. As to quaternary structure, homodimer. Interacts with host SPCS1; this interaction is essential for viral particle assembly. Interacts with envelope glycoprotein E1. Interacts with envelope glycoprotein E2. Interacts with viroporin p7. Interacts with serine protease/helicase NS3. Part of the replication complex composed of NS2, NS3, NS4A, NS4B, NS5A and the RNA-directed RNA polymerase embedded in an ER-derived membranous web. Part of the viral assembly initiation complex composed of NS2, E1, E2, NS3, NS4A, NS5A and the mature core protein. In terms of assembly, interacts with protease NS2. Interacts with non-structural protein 4A; this interaction stabilizes the folding of NS3 serine protease. NS3-NS4A interaction is essential for NS3 activation and allows membrane anchorage of the latter. NS3/NS4A complex also prevents phosphorylation of host IRF3, thus preventing the establishment of dsRNA induced antiviral state. Interacts with host MAVS; this interaction leads to the cleavage and inhibition of host MAVS. Interacts with host TICAM1; this interaction leads to the cleavage and inhibition of host TICAM1. Interacts with host TANK-binding kinase/TBK1; this interaction results in the inhibition of the association between TBK1 and IRF3, which leads to the inhibition of IRF3 activation. Interacts with host RBM24. Part of the replication complex composed of NS2, NS3, NS4A, NS4B, NS5A and the RNA-directed RNA polymerase embedded in an ER-derived membranous web. Part of the viral assembly initiation complex composed of NS2, E1, E2, NS3, NS4A, NS5A and the mature core protein. Interacts with NS3 serine protease; this interaction stabilizes the folding of NS3 serine protease. NS3-NS4A interaction is essential for NS3 activation and allows membrane anchorage of the latter. Interacts with non-structural protein 5A (via N-terminus). Part of the replication complex composed of NS2, NS3, NS4A, NS4B, NS5A and the RNA-directed RNA polymerase embedded in an ER-derived membranous web. Part of the viral assembly initiation complex composed of NS2, E1, E2, NS3, NS4A, NS5A and the mature core protein. As to quaternary structure, homomultimer. Interacts with non-structural protein NS5A. Interacts with host PLA2G4C; this interaction likely initiates the recruitment of replication complexes to lipid droplets. Interacts with host STING; this interaction disrupts the interaction between STING and TBK1 thereby suppressing the interferon signaling. Part of the replication complex composed of NS2, NS3, NS4A, NS4B, NS5A and the RNA-directed RNA polymerase embedded in an ER-derived membranous web. In terms of assembly, monomer. Homodimer; dimerization is required for RNA-binding. Interacts with the mature core protein. Interacts (via N-terminus) with non-structural protein 4A. Interacts with non-structural protein 4B. Interacts (via region D2) with RNA-directed RNA polymerase. Part of the viral assembly initiation complex composed of NS2, E1, E2, NS3, NS4A, NS5A and the mature core protein. Part of the replication complex composed of NS2, NS3, NS4A, NS4B, NS5A and the RNA-directed RNA polymerase embedded in an ER-derived membranous web. Interacts with host GRB2. Interacts with host BIN1. Interacts with host PIK3R1. Interacts with host SRCAP. Interacts with host FKBP8. Interacts (via C-terminus) with host VAPB (via MSP domain). Interacts with host EIF2AK2/PKR; this interaction leads to disruption of EIF2AK2 dimerization by NS5A and probably allows the virus to evade the innate immune response. Interacts (via N-terminus) with host PACSIN2 (via N-terminus); this interaction attenuates protein kinase C alpha-mediated phosphorylation of PACSIN2 by disrupting the interaction between PACSIN2 and PRKCA. Interacts (via N-terminus) with host SRC kinase (via SH2 domain). Interacts with most Src-family kinases. Interacts with host IFI27 and SKP2; promotes the ubiquitin-mediated proteasomal degradation of NS5A. Interacts with host GPS2. Interacts with host TNFRSF21; this interaction allows the modulation by the virus of JNK, p38 MAPK, STAT3, and Akt signaling pathways in a DR6-dependent manner. Interacts (via N-terminus) with host CIDEB (via N-terminus); this interaction seems to regulate the association of HCV particles with APOE. Interacts with host CHKA/Choline Kinase-alpha; CHKA bridges host PI4KA and NS5A and potentiates NS5A-stimulated PI4KA activity, which then facilitates the targeting of the ternary complex to the ER for viral replication. Interacts with host SPSB2 (via C-terminus); this interaction targets NS5A for ubiquitination and degradation. Interacts with host RAB18; this interaction may promote the association of NS5A and other replicase components with lipid droplets. Interacts (via region D2) with host PPIA/CYPA; the interaction stimulates RNA-binding ability of NS5A and is dependent on the peptidyl-prolyl cis-trans isomerase activity of PPIA/CYPA. Interacts with host TRIM14; this interaction induces the degradation of NS5A. Homooligomer. Interacts with non-structural protein 5A. Interacts with host VAPB. Interacts with host PRK2/PKN2. Interacts with host HNRNPA1 and SEPT6; these interactions facilitate viral replication. Part of the replication complex composed of NS2, NS3, NS4A, NS4B, NS5A and the RNA-directed RNA polymerase. Zn(2+) serves as cofactor. Mg(2+) is required as a cofactor. Post-translationally, specific enzymatic cleavages in vivo yield mature proteins. The structural proteins, core, E1, E2 and p7 are produced by proteolytic processing by host signal peptidases. The core protein precursor is synthesized as a 23 kDa, which is retained in the ER membrane through the hydrophobic signal peptide. Cleavage by the signal peptidase releases the 21 kDa mature core protein. The cleavage of the core protein precursor occurs between aminoacids 176 and 188 but the exact cleavage site is not known. Some degraded forms of the core protein appear as well during the course of infection. The other proteins (p7, NS2, NS3, NS4A, NS4B, NS5A and NS5B) are cleaved by the viral proteases. Autoprocessing between NS2 and NS3 is mediated by the NS2 cysteine protease catalytic domain and regulated by the NS3 N-terminal domain. Phosphorylated by host PKC and PKA. In terms of processing, ubiquitinated; mediated by UBE3A and leading to core protein subsequent proteasomal degradation. Post-translationally, highly N-glycosylated. Palmitoylation is required for NS2/3 autoprocessing and E2 recruitment to membranes. In terms of processing, palmitoylated. This modification may play a role in its polymerization or in protein-protein interactions. Post-translationally, phosphorylated on serines in a basal form termed p56. p58 is a hyperphosphorylated form of p56. p56 and p58 coexist in the cell in roughly equivalent amounts. Hyperphosphorylation is dependent on the presence of NS4A. Host CSNK1A1/CKI-alpha or RPS6KB1 kinases may be responsible for NS5A phosphorylation. Tyrosine phosphorylation is essential for the interaction with host SRC. In terms of processing, ubiquitinated. Ubiquitination, most probably at Lys-2356, mediated by host IFI27 and SKP2 leads to proteasomal degradation, restricting viral infection. Ubiquitination by host TRIM22 leads to interruption of viral replication. Post-translationally, the N-terminus is phosphorylated by host PRK2/PKN2.

The protein localises to the host endoplasmic reticulum membrane. The protein resides in the host mitochondrion membrane. It is found in the virion. It localises to the host cytoplasm. Its subcellular location is the host nucleus. The protein localises to the host lipid droplet. The protein resides in the virion membrane. It is found in the host mitochondrion. It localises to the host cell membrane. Its subcellular location is the host perinuclear region. It catalyses the reaction Hydrolysis of four peptide bonds in the viral precursor polyprotein, commonly with Asp or Glu in the P6 position, Cys or Thr in P1 and Ser or Ala in P1'.. The catalysed reaction is a ribonucleoside 5'-triphosphate + H2O = a ribonucleoside 5'-diphosphate + phosphate + H(+). The enzyme catalyses ATP + H2O = ADP + phosphate + H(+). It carries out the reaction RNA(n) + a ribonucleoside 5'-triphosphate = RNA(n+1) + diphosphate. With respect to regulation, inhibited by the antiviral drug hexamethylene amiloride. Inhibition by amantadine appears to be genotype-dependent. Also inhibited by long-alkyl-chain iminosugar derivatives. Activity is up-regulated by PRK2/PKN2-mediated phosphorylation. Functionally, packages viral RNA to form a viral nucleocapsid, and promotes virion budding. Participates in the viral particle production as a result of its interaction with the non-structural protein 5A. Binds RNA and may function as a RNA chaperone to induce the RNA structural rearrangements taking place during virus replication. Modulates viral translation initiation by interacting with viral IRES and 40S ribosomal subunit. Affects various cell signaling pathways, host immunity and lipid metabolism. Prevents the establishment of cellular antiviral state by blocking the interferon-alpha/beta (IFN-alpha/beta) and IFN-gamma signaling pathways and by blocking the formation of phosphorylated STAT1 and promoting ubiquitin-mediated proteasome-dependent degradation of STAT1. Activates STAT3 leading to cellular transformation. Regulates the activity of cellular genes, including c-myc and c-fos. May repress the promoter of p53, and sequester CREB3 and SP110 isoform 3/Sp110b in the cytoplasm. Represses cell cycle negative regulating factor CDKN1A, thereby interrupting an important check point of normal cell cycle regulation. Targets transcription factors involved in the regulation of inflammatory responses and in the immune response: suppresses TNF-induced NF-kappa-B activation, and activates AP-1. Binds to dendritic cells (DCs) via C1QR1, resulting in down-regulation of T-lymphocytes proliferation. Alters lipid metabolism by interacting with hepatocellular proteins involved in lipid accumulation and storage. Induces up-regulation of FAS promoter activity, and thereby contributes to the increased triglyceride accumulation in hepatocytes (steatosis). Its function is as follows. Forms a heterodimer with envelope glycoprotein E2, which mediates virus attachment to the host cell, virion internalization through clathrin-dependent endocytosis and fusion with host membrane. Fusion with the host cell is most likely mediated by both E1 and E2, through conformational rearrangements of the heterodimer required for fusion rather than a classical class II fusion mechanism. E1/E2 heterodimer binds host apolipoproteins such as APOB and ApoE thereby forming a lipo-viro-particle (LVP). APOE associated to the LVP allows the initial virus attachment to cell surface receptors such as the heparan sulfate proteoglycans (HSPGs), syndecan-1 (SDC1), syndecan-1 (SDC2), the low-density lipoprotein receptor (LDLR) and scavenger receptor class B type I (SCARB1). The cholesterol transfer activity of SCARB1 allows E2 exposure and binding of E2 to SCARB1 and the tetraspanin CD81. E1/E2 heterodimer binding on CD81 activates the epithelial growth factor receptor (EGFR) signaling pathway. Diffusion of the complex E1-E2-EGFR-SCARB1-CD81 to the cell lateral membrane allows further interaction with Claudin 1 (CLDN1) and occludin (OCLN) to finally trigger HCV entry. In terms of biological role, forms a heterodimer with envelope glycoprotein E1, which mediates virus attachment to the host cell, virion internalization through clathrin-dependent endocytosis and fusion with host membrane. Fusion with the host cell is most likely mediated by both E1 and E2, through conformational rearrangements of the heterodimer required for fusion rather than a classical class II fusion mechanism. The interaction between envelope glycoprotein E2 and host apolipoprotein E/APOE allows the proper assembly, maturation and infectivity of the viral particles. This interaction is probably promoted via the up-regulation of cellular autophagy by the virus. E1/E2 heterodimer binds host apolipoproteins such as APOB and APOE thereby forming a lipo-viro-particle (LVP). APOE associated to the LVP allows the initial virus attachment to cell surface receptors such as the heparan sulfate proteoglycans (HSPGs), syndecan-1 (SDC1), syndecan-1 (SDC2), the low-density lipoprotein receptor (LDLR) and scavenger receptor class B type I (SCARB1). The cholesterol transfer activity of SCARB1 allows E2 exposure and binding of E2 to SCARB1 and the tetraspanin CD81. E1/E2 heterodimer binding on CD81 activates the epithelial growth factor receptor (EGFR) signaling pathway. Diffusion of the complex E1-E2-EGFR-SCARB1-CD81 to the cell lateral membrane allows further interaction with Claudin 1 (CLDN1) and occludin (OCLN) to finally trigger HCV entry. Inhibits host EIF2AK2/PKR activation, preventing the establishment of an antiviral state. Viral ligand for CD209/DC-SIGN and CLEC4M/DC-SIGNR, which are respectively found on dendritic cells (DCs), and on liver sinusoidal endothelial cells and macrophage-like cells of lymph node sinuses. These interactions allow the capture of circulating HCV particles by these cells and subsequent facilitated transmission to permissive cells such as hepatocytes and lymphocyte subpopulations. The interaction between E2 and host amino acid transporter complex formed by SLC3A2 and SLC7A5/LAT1 may facilitate viral entry into host cell. Ion channel protein that acts as a viroporin and plays an essential role in the assembly, envelopment and secretion of viral particles. Regulates the host cell secretory pathway, which induces the intracellular retention of viral glycoproteins and favors assembly of viral particles. Creates a pore in acidic organelles and releases Ca(2+) and H(+) in the cytoplasm of infected cells, leading to a productive viral infection. High levels of cytoplasmic Ca(2+) may trigger membrane trafficking and transport of viral ER-associated proteins to viroplasms, sites of viral genome replication. This ionic imbalance induces the assembly of the inflammasome complex, which triggers the maturation of pro-IL-1beta into IL-1beta through the action of caspase-1. Targets also host mitochondria and induces mitochondrial depolarization. In addition of its role as a viroporin, acts as a lipid raft adhesion factor. Functionally, cysteine protease required for the proteolytic auto-cleavage between the non-structural proteins NS2 and NS3. The N-terminus of NS3 is required for the function of NS2 protease (active region NS2-3). Promotes the initiation of viral particle assembly by mediating the interaction between structural and non-structural proteins. Its function is as follows. Displays three enzymatic activities: serine protease with a chymotrypsin-like fold, NTPase and RNA helicase. NS3 serine protease, in association with NS4A, is responsible for the cleavages of NS3-NS4A, NS4A-NS4B, NS4B-NS5A and NS5A-NS5B. The NS3/NS4A complex prevents phosphorylation of host IRF3, thus preventing the establishment of dsRNA induced antiviral state. The NS3/NS4A complex induces host amino acid transporter component SLC3A2, thus contributing to HCV propagation. NS3 RNA helicase binds to RNA and unwinds both dsDNA and dsRNA in the 3' to 5' direction, and likely resolves RNA complicated stable secondary structures in the template strand. Binds a single ATP and catalyzes the unzipping of a single base pair of dsRNA. Inhibits host antiviral proteins TBK1 and IRF3 thereby preventing the establishment of an antiviral state. Cleaves host MAVS/CARDIF thereby preventing the establishment of an antiviral state. Cleaves host TICAM1/TRIF, thereby disrupting TLR3 signaling and preventing the establishment of an antiviral state. In terms of biological role, peptide cofactor which forms a non-covalent complex with the N-terminal of NS3 serine protease. The NS3/NS4A complex prevents phosphorylation of host IRF3, thus preventing the establishment of dsRNA induced antiviral state. The NS3/NS4A complex induces host amino acid transporter component SLC3A2, thus contributing to HCV propagation. Induces a specific membrane alteration that serves as a scaffold for the virus replication complex. This membrane alteration gives rise to the so-called ER-derived membranous web that contains the replication complex. NS4B self-interaction contributes to its function in membranous web formation. Promotes host TRIF protein degradation in a CASP8-dependent manner thereby inhibiting host TLR3-mediated interferon signaling. Disrupts the interaction between STING and TBK1 contributing to the inhibition of interferon signaling. Functionally, phosphorylated protein that is indispensable for viral replication and assembly. Both hypo- and hyperphosphorylated states are required for the viral life cycle. The hyperphosphorylated form of NS5A is an inhibitor of viral replication. Involved in RNA-binding and especially in binding to the viral genome. Zinc is essential for RNA-binding. Participates in the viral particle production as a result of its interaction with the mature viral core protein. Its interaction with host VAPB may target the viral replication complex to vesicles. Down-regulates viral IRES translation initiation. Mediates interferon resistance, presumably by interacting with and inhibiting host EIF2AK2/PKR. Prevents BIN1-induced apoptosis. Acts as a transcriptional activator of some host genes important for viral replication when localized in the nucleus. Via the interaction with host PACSIN2, modulates lipid droplet formation in order to promote virion assembly. Modulates TNFRSF21/DR6 signaling pathway for viral propagation. Its function is as follows. RNA-dependent RNA polymerase that performs primer-template recognition and RNA synthesis during viral replication. Initiates RNA transcription/replication at a flavin adenine dinucleotide (FAD), resulting in a 5'- FAD cap on viral RNAs. In this way, recognition of viral 5' RNA by host pattern recognition receptors can be bypassed, thereby evading activation of antiviral pathways. This is Genome polyprotein from Homo sapiens (Human).